Here is a 247-residue protein sequence, read N- to C-terminus: 5'-nucleotidase SurE (247 aa).

Asp-8, Asp-9, Ser-39, and Asn-91 together coordinate a divalent metal cation.

This sequence belongs to the SurE nucleotidase family. A divalent metal cation serves as cofactor.

It localises to the cytoplasm. The catalysed reaction is a ribonucleoside 5'-phosphate + H2O = a ribonucleoside + phosphate. Functionally, nucleotidase that shows phosphatase activity on nucleoside 5'-monophosphates. The chain is 5'-nucleotidase SurE from Azoarcus sp. (strain BH72).